Reading from the N-terminus, the 538-residue chain is indole-2-monooxygenase (538 aa).

A helical transmembrane segment spans residues 22–42 (ALLLAIPFSLLLLPLLLRYLA). C481 provides a ligand contact to heme.

The protein belongs to the cytochrome P450 family. Heme is required as a cofactor.

It localises to the membrane. The enzyme catalyses indole + reduced [NADPH--hemoprotein reductase] + O2 = indolin-2-one + oxidized [NADPH--hemoprotein reductase] + H2O + H(+). It functions in the pathway secondary metabolite biosynthesis; 2,4-dihydroxy-1,4-benzoxazin-3-one biosynthesis; 2,4-dihydroxy-1,4-benzoxazin-3-one from indoleglycerol phosphate: step 2/5. Functionally, catalyzes the conversion of indole to indolin-2-one. The protein is indole-2-monooxygenase (CYP71C4) of Zea mays (Maize).